A 790-amino-acid chain; its full sequence is RNA-directed RNA polymerase 2a (790 aa).

The 116-residue stretch at 524–639 (FHFKEIDFSK…GTVEELPRDQ (116 aa)) folds into the RdRp catalytic domain. The segment at 771–790 (IKPRRVKKSHSDARSRARRA) is disordered. The span at 779-790 (SHSDARSRARRA) shows a compositional bias: basic and acidic residues.

It belongs to the bromoviridae 2a family. Interacts with replication protein 1a.

It carries out the reaction RNA(n) + a ribonucleoside 5'-triphosphate = RNA(n+1) + diphosphate. RNA-dependent RNA polymerase which replicates the viral genome composed of 3 RNA segments, RNA1, RNA2 and RNA3. In Alfalfa mosaic virus (AMV), this protein is RNA-directed RNA polymerase 2a.